Reading from the N-terminus, the 281-residue chain is Ribosomal RNA large subunit methyltransferase J (281 aa).

S-adenosyl-L-methionine-binding positions include His-19, His-42, Ser-101, Glu-119, 144 to 145, and Asp-165; that span reads NG. The active-site Proton acceptor is Asp-165.

It belongs to the RlmJ family. Monomer.

It catalyses the reaction adenosine(2030) in 23S rRNA + S-adenosyl-L-methionine = N(6)-methyladenosine(2030) in 23S rRNA + S-adenosyl-L-homocysteine + H(+). Its function is as follows. Specifically methylates the adenine in position 2030 of 23S rRNA. The chain is Ribosomal RNA large subunit methyltransferase J from Haemophilus influenzae (strain ATCC 51907 / DSM 11121 / KW20 / Rd).